We begin with the raw amino-acid sequence, 296 residues long: 4-hydroxybenzoate octaprenyltransferase (296 aa).

Transmembrane regions (helical) follow at residues Ile-28 to Ile-48, Leu-51 to Ile-71, Leu-102 to Leu-122, Phe-143 to Phe-163, Ala-174 to Met-194, Phe-212 to Ala-232, Val-233 to Leu-253, and Phe-274 to Phe-294.

This sequence belongs to the UbiA prenyltransferase family. It depends on Mg(2+) as a cofactor.

It is found in the cell inner membrane. The catalysed reaction is all-trans-octaprenyl diphosphate + 4-hydroxybenzoate = 4-hydroxy-3-(all-trans-octaprenyl)benzoate + diphosphate. Its pathway is cofactor biosynthesis; ubiquinone biosynthesis. In terms of biological role, catalyzes the prenylation of para-hydroxybenzoate (PHB) with an all-trans polyprenyl group. Mediates the second step in the final reaction sequence of ubiquinone-8 (UQ-8) biosynthesis, which is the condensation of the polyisoprenoid side chain with PHB, generating the first membrane-bound Q intermediate 3-octaprenyl-4-hydroxybenzoate. This chain is 4-hydroxybenzoate octaprenyltransferase, found in Neisseria gonorrhoeae (strain NCCP11945).